The primary structure comprises 213 residues: Orotate phosphoribosyltransferase (213 aa).

K26 is a binding site for 5-phospho-alpha-D-ribose 1-diphosphate. F34 to F35 lines the orotate pocket. 5-phospho-alpha-D-ribose 1-diphosphate is bound by residues Y72–K73, R99, K100, K103, H105, and D124–A132. The orotate site is built by T128 and R156.

This sequence belongs to the purine/pyrimidine phosphoribosyltransferase family. PyrE subfamily. As to quaternary structure, homodimer. The cofactor is Mg(2+).

The enzyme catalyses orotidine 5'-phosphate + diphosphate = orotate + 5-phospho-alpha-D-ribose 1-diphosphate. It participates in pyrimidine metabolism; UMP biosynthesis via de novo pathway; UMP from orotate: step 1/2. Catalyzes the transfer of a ribosyl phosphate group from 5-phosphoribose 1-diphosphate to orotate, leading to the formation of orotidine monophosphate (OMP). This Pseudomonas syringae pv. syringae (strain B728a) protein is Orotate phosphoribosyltransferase.